A 383-amino-acid chain; its full sequence is Na(+)/H(+) antiporter (383 aa).

12 consecutive transmembrane segments (helical) span residues 1-21 (MEFIGILCLILVATTIGSHIS), 24-44 (FGIPAVIGQLLVGVLLGQAGL), 51-71 (ILVHDFSEIGVILLMFLAGLE), 83-103 (PGMFVALLGILFPVFFGWLTG), 112-132 (EAIFFGIILAATSVSISVEVL), 145-165 (TILGASVVDDILVVLVLSFSL), 186-206 (LFYFLFIFLLVKWIAPFLMSL), 216-236 (IIIMSLVICLGMSYLADLIGL), 262-282 (VEALGYAVFIPVFFVSVGLEV), 291-311 (ILFILILTLVAILTKLIGGYI), 323-343 (ALMVGAGMISRGEMALIILQI), and 353-373 (HYYSPLVIVVLLSTLISPLIL).

The protein belongs to the monovalent cation:proton antiporter 2 (CPA2) transporter (TC 2.A.37) family.

It is found in the cell membrane. In terms of biological role, na(+)/H(+) antiporter that extrudes sodium in exchange for external protons. Can also transport lithium. The sequence is that of Na(+)/H(+) antiporter (napA) from Enterococcus hirae.